Consider the following 490-residue polypeptide: Pre-glycoprotein polyprotein GP complex (490 aa).

A lipid anchor (N-myristoyl glycine; by host) is attached at Gly-2. Residues 2-17 are Extracellular-facing; that stretch reads GQIVTFFQEVPHVIEE. The chain crosses the membrane as a helical span at residues 18–33; sequence VMNIVLIALSILAILK. Residues 34–58 are Cytoplasmic-facing; sequence GLYNVATCGLIGLVTFLLLSGRSCS. Zn(2+) is bound at residue Cys-57. The Extracellular segment spans residues 59–431; sequence LIYKGTYELQ…QGKTPLGLVD (373 aa). N-linked (GlcNAc...) asparagine; by host glycosylation is found at Asn-78, Asn-88, Asn-98, Asn-108, Asn-118, and Asn-166. Intrachain disulfides connect Cys-85-Cys-230, Cys-117-Cys-154, Cys-179-Cys-211, Cys-278-Cys-291, Cys-300-Cys-309, and Cys-363-Cys-384. Residue Asn-223 is glycosylated (N-linked (GlcNAc...) asparagine; by host). Asn-364, Asn-372, Asn-389, and Asn-394 each carry an N-linked (GlcNAc...) asparagine; by host glycan. The helical transmembrane segment at 432-452 threads the bilayer; the sequence is LFVFSTSFYLISIFLHLVKIP. Residues 453–490 are Cytoplasmic-facing; sequence THRHIVGKPCPKPHRLNHMGICSCGLYKQPGVPVRWKR. Zn(2+) contacts are provided by His-454, His-456, Cys-462, His-466, Cys-474, and Cys-476.

It belongs to the arenaviridae GPC protein family. Interacts with glycoprotein G2. Part of the GP complex (GP-C) together with glycoprotein G1 and glycoprotein G2. The GP-complex interacts with protein Z, which interacts with ribonucleocapsid; these interactions may induce virion budding. In terms of assembly, homotrimer; disulfide-linked. In pre-fusion state, G1 homotrimers bind G2 homotrimers via ionic interactions. Part of the GP complex (GP-C) together with glycoprotein G2 and the stable signal peptide. Interacts with the primary host receptor DAG1 on the cell surface; this interaction occurs at pH 8.0 but not at pH 6.0 and below. Upon virus internalization and at endosomal pH, interacts with the host lysosomal protein LAMP1; this interaction mediates G1 dissociation from GP-C and membrane fusion. The GP-complex interacts with protein Z, which interacts with ribonucleocapsid; these interactions may induce virion budding. As to quaternary structure, homotrimer. Interacts with the stable signal peptide. In pre-fusion state, G2 homotrimers bind G1 homotrimers via ionic interactions. Part of the GP complex (GP-C) together with glycoprotein G1 and the stable signal peptide. Acidification in the endosome triggers rearrangements, which ultimately leads to a 6 helix bundle formed by the two heptad repeat domains (HR1 and HR2) in post-fusion state. The GP-complex interacts with protein Z, which interacts with ribonucleocapsid; these interactions may induce virion budding. In terms of processing, specific enzymatic cleavages in vivo yield mature proteins. GP-C polyprotein is cleaved in the endoplasmic reticulum by the host protease MBTPS1. Only cleaved glycoprotein is incorporated into virions. Post-translationally, the SSP remains stably associated with the GP complex following cleavage by signal peptidase and plays crucial roles in the trafficking of GP through the secretory pathway. Myristoylation is necessary for GP2-mediated fusion activity.

Its subcellular location is the virion membrane. The protein localises to the host endoplasmic reticulum membrane. It is found in the host Golgi apparatus membrane. It localises to the host cell membrane. In terms of biological role, functions as a cleaved signal peptide that is retained as the third component of the GP complex (GP-C). Helps to stabilize the spike complex in its native conformation. The SSP is required for efficient glycoprotein expression, post-translational maturation cleavage of G1 and G2, glycoprotein transport to the cell surface plasma membrane, formation of infectious virus particles, and acid pH-dependent glycoprotein-mediated cell fusion. Its function is as follows. Forms the virion spikes together with glycoprotein G2. The glycoprotein spike trimers are connected to the underlying matrix. Interacts with the host receptor. Mediates virus attachment to the host primary receptor alpha-dystroglycan DAG1 (alpha-DG) at the cell surface. This attachment induces virion internalization apparently through macropinocytosis. Following endocytosis, there is a pH-dependent switch from binding DAG1 to the host lysosomal receptor LAMP1. This latter binding triggers the dissociation of GP1, exposing the fusion subunit, GP2, such that fusion can occur. Down-modulates host DAG1. Functionally, forms the virion spikes together with glycoprotein G1. The glycoprotein spike trimers are connected to the underlying matrix. Class I viral fusion protein that directs fusion of viral and host endosomal membranes, leading to delivery of the nucleocapsid into the cytoplasm. Membrane fusion is mediated by irreversible conformational changes induced by acidification. This Lassa virus (strain GA391) (LASV) protein is Pre-glycoprotein polyprotein GP complex.